The following is a 405-amino-acid chain: 4-hydroxy-3-methylbut-2-en-1-yl diphosphate synthase (ferredoxin) (405 aa).

[4Fe-4S] cluster is bound by residues C314, C317, C348, and E355.

This sequence belongs to the IspG family. Requires [4Fe-4S] cluster as cofactor.

The catalysed reaction is (2E)-4-hydroxy-3-methylbut-2-enyl diphosphate + 2 oxidized [2Fe-2S]-[ferredoxin] + H2O = 2-C-methyl-D-erythritol 2,4-cyclic diphosphate + 2 reduced [2Fe-2S]-[ferredoxin] + H(+). It participates in isoprenoid biosynthesis; isopentenyl diphosphate biosynthesis via DXP pathway; isopentenyl diphosphate from 1-deoxy-D-xylulose 5-phosphate: step 5/6. In terms of biological role, converts 2C-methyl-D-erythritol 2,4-cyclodiphosphate (ME-2,4cPP) into 1-hydroxy-2-methyl-2-(E)-butenyl 4-diphosphate. The chain is 4-hydroxy-3-methylbut-2-en-1-yl diphosphate synthase (ferredoxin) from Prochlorococcus marinus subsp. pastoris (strain CCMP1986 / NIES-2087 / MED4).